The chain runs to 198 residues: uncharacterized protein (198 aa).

Disordered regions lie at residues 15 to 69 (RLGQ…KDTR) and 172 to 198 (FSVK…LWGL). 2 stretches are compositionally biased toward basic and acidic residues: residues 37–49 (HKSF…DQSR) and 56–69 (FNEK…KDTR). Low complexity predominate over residues 176-186 (ESSNLSNNDSD). Over residues 187–198 (ASLDEDTLLWGL) the composition is skewed to acidic residues.

The protein resides in the nucleus. This is an uncharacterized protein from Schizosaccharomyces pombe (strain 972 / ATCC 24843) (Fission yeast).